The following is a 115-amino-acid chain: Large ribosomal subunit protein bL19 (115 aa).

The protein belongs to the bacterial ribosomal protein bL19 family.

Its function is as follows. This protein is located at the 30S-50S ribosomal subunit interface and may play a role in the structure and function of the aminoacyl-tRNA binding site. The chain is Large ribosomal subunit protein bL19 from Buchnera aphidicola subsp. Cinara cedri (strain Cc).